A 327-amino-acid polypeptide reads, in one-letter code: Deoxynucleotidyltransferase terminal-interacting protein 1 (327 aa).

The span at 1 to 11 (MGATGDTGGPR) shows a compositional bias: gly residues. Disordered stretches follow at residues 1 to 34 (MGAT…PVLT) and 146 to 172 (KRGR…LPGH). The tract at residues 55 to 146 (MTTSFTDPAI…RLAHELPGIK (92 aa)) is important for dimerization. Over residues 146 to 161 (KRGRQAEEESHREAPF) the composition is skewed to basic and acidic residues. The segment at residues 157–171 (REAPFPKRGKVGLPG) is a DNA-binding region (a.T hook). A Nuclear localization signal motif is present at residues 162–168 (PKRGKVG). The important for DNA and nucleosome binding stretch occupies residues 195-314 (REGPKWDPAR…MRKYMETLRT (120 aa)). The H-T-H motif DNA-binding region spans 214–235 (GSRANKALGMGGTRGRIYIKHP).

As to quaternary structure, monomer and homodimer. A minor proportion may form homotrimers. Interacts with ZNF541. Interacts with the terminal deoxynucleotidyltransferase DNTT. Interacts with TRERF1. Identified in a histone deacetylase complex that contains DNTTIP1, HDAC1 and MIDEAS; this complex assembles into a tetramer that contains four copies of each protein chain. Component of a histone deacetylase complex containing DNTTIP1, ZNF541, HDAC1 and HDAC2. Identified in a complex with KCTD19, HDAC1, HDAC2 and ZNF541. Expressed in thymus, bone marrow and spleen.

It is found in the nucleus. Its function is as follows. Increases DNTT terminal deoxynucleotidyltransferase activity (in vitro). Also acts as a transcriptional regulator, binding to the consensus sequence 5'-GNTGCATG-3' following an AT-tract. Associates with RAB20 promoter and positively regulates its transcription. Binds DNA and nucleosomes; may recruit HDAC1 complexes to nucleosomes or naked DNA. In Rattus norvegicus (Rat), this protein is Deoxynucleotidyltransferase terminal-interacting protein 1 (Dnttip1).